The primary structure comprises 24 residues: Conotoxin PIVF (24 aa).

3 cysteine pairs are disulfide-bonded: Cys-2–Cys-10, Cys-3–Cys-15, and Cys-13–Cys-19. The residue at position 24 (Lys-24) is a Lysine amide.

The protein belongs to the conotoxin A superfamily. As to expression, expressed by the venom duct.

The protein resides in the secreted. Functionally, probable neurotoxin with ion channel inhibitor activity. In vivo, elicits dose-dependently excitatory activity upon injection into fish. Its action is slowly reversible. In Conus purpurascens (Purple cone), this protein is Conotoxin PIVF.